Consider the following 61-residue polypeptide: Large ribosomal subunit protein eL37 (61 aa).

4 residues coordinate Zn(2+): C19, C22, C34, and C37. Residues 19–37 form a C4-type zinc finger; the sequence is CRRCGRNSFNARKGYCAAC.

The protein belongs to the eukaryotic ribosomal protein eL37 family. Zn(2+) is required as a cofactor.

In terms of biological role, binds to the 23S rRNA. This Sulfolobus acidocaldarius (strain ATCC 33909 / DSM 639 / JCM 8929 / NBRC 15157 / NCIMB 11770) protein is Large ribosomal subunit protein eL37.